Reading from the N-terminus, the 541-residue chain is Transcription termination factor MTERF4, chloroplastic (541 aa).

The transit peptide at 1–45 directs the protein to the chloroplast; sequence MKIRFCNGFTKPGFLLVHFEPPSFFAVRSRSLSDSTYGNLCNHKK. Disordered regions lie at residues 66 to 103 and 503 to 541; these read SRSLDSPRRERSSRSSSSSGRDRDRDKDKGRDSKSLYS and EVETDPSSFDMNTLMQPEREEESDSEYEEEEDDDDEEFA. A compositionally biased stretch (basic and acidic residues) spans 85-99; it reads GRDRDRDKDKGRDSK. The segment covering 507–517 has biased composition (polar residues); it reads DPSSFDMNTLM. Over residues 521–541 the composition is skewed to acidic residues; the sequence is REEESDSEYEEEEDDDDEEFA.

The protein belongs to the mTERF family.

The protein resides in the plastid. Its subcellular location is the chloroplast. It localises to the mitochondrion. Its function is as follows. Transcription termination factor required for processing and steady-state levels of plastid transcripts. Required for splicing of the chloroplastic Clp protease (ClpP) group IIa intron. Required for maturation of 16S rRNA and 23S rRNA in the chloroplast. Essential for embryogenesis. Required for the maintenance of the correct levels of transcripts in the mitochondria and chloroplasts. In Arabidopsis thaliana (Mouse-ear cress), this protein is Transcription termination factor MTERF4, chloroplastic.